The following is a 274-amino-acid chain: Remorin 4.2 (274 aa).

The span at 1-30 (MLTLYHQERSPDATSNDRDETPETVVREVH) shows a compositional bias: basic and acidic residues. 3 disordered regions span residues 1–71 (MLTL…EGEN), 117–157 (TDHE…TVQR), and 218–245 (AMEK…AKRG). 2 stretches are compositionally biased toward polar residues: residues 61–71 (RSATTMSEGEN) and 145–156 (GPGQSRVGSTVQ). A coiled-coil region spans residues 204-239 (MKKIERKLEERKAKAMEKTQNNVAKAQRKAEERRAT). The segment covering 231–245 (RKAEERRATAEAKRG) has biased composition (basic and acidic residues).

The protein belongs to the remorin family. As to quaternary structure, forms homodimer and heterodimer with REM4.1. Interacts with KIN11. Post-translationally, probably ubiquitinated and degraded by the 26S proteasome pathway. In terms of tissue distribution, predominantly detected in bud, stem, root, flower, silique, and leaves, and enhanced dramatically in senescence leaf.

Its subcellular location is the cell membrane. Collaborates with REM4.1 to positively regulate the BCTV and BSCTV susceptibility. This is Remorin 4.2 from Arabidopsis thaliana (Mouse-ear cress).